Consider the following 259-residue polypeptide: Phosphatidylserine decarboxylase proenzyme (259 aa).

Residue S183 is the Schiff-base intermediate with substrate; via pyruvic acid of the active site. S183 carries the post-translational modification Pyruvic acid (Ser); by autocatalysis.

It belongs to the phosphatidylserine decarboxylase family. PSD-A subfamily. As to quaternary structure, heterodimer of a large membrane-associated beta subunit and a small pyruvoyl-containing alpha subunit. Requires pyruvate as cofactor. Post-translationally, is synthesized initially as an inactive proenzyme. Formation of the active enzyme involves a self-maturation process in which the active site pyruvoyl group is generated from an internal serine residue via an autocatalytic post-translational modification. Two non-identical subunits are generated from the proenzyme in this reaction, and the pyruvate is formed at the N-terminus of the alpha chain, which is derived from the carboxyl end of the proenzyme. The post-translation cleavage follows an unusual pathway, termed non-hydrolytic serinolysis, in which the side chain hydroxyl group of the serine supplies its oxygen atom to form the C-terminus of the beta chain, while the remainder of the serine residue undergoes an oxidative deamination to produce ammonia and the pyruvoyl prosthetic group on the alpha chain.

The protein localises to the cell membrane. The catalysed reaction is a 1,2-diacyl-sn-glycero-3-phospho-L-serine + H(+) = a 1,2-diacyl-sn-glycero-3-phosphoethanolamine + CO2. It functions in the pathway phospholipid metabolism; phosphatidylethanolamine biosynthesis; phosphatidylethanolamine from CDP-diacylglycerol: step 2/2. Functionally, catalyzes the formation of phosphatidylethanolamine (PtdEtn) from phosphatidylserine (PtdSer). The polypeptide is Phosphatidylserine decarboxylase proenzyme (Neisseria gonorrhoeae (strain NCCP11945)).